The following is a 504-amino-acid chain: Maturase K (504 aa).

Belongs to the intron maturase 2 family. MatK subfamily.

It is found in the plastid. It localises to the chloroplast. In terms of biological role, usually encoded in the trnK tRNA gene intron. Probably assists in splicing its own and other chloroplast group II introns. This Quercus petraea (Durmast oak) protein is Maturase K.